The sequence spans 130 residues: 3-aminoacrylate deaminase RutC (130 aa).

This sequence belongs to the RutC family.

The enzyme catalyses (Z)-3-aminoacrylate + H2O + H(+) = 3-oxopropanoate + NH4(+). Its function is as follows. Involved in pyrimidine catabolism. Catalyzes the deamination of 3-aminoacrylate to malonic semialdehyde, a reaction that can also occur spontaneously. RutC may facilitate the reaction and modulate the metabolic fitness, rather than catalyzing essential functions. This chain is 3-aminoacrylate deaminase RutC, found in Haliangium ochraceum (strain DSM 14365 / JCM 11303 / SMP-2).